A 37-amino-acid polypeptide reads, in one-letter code: Large ribosomal subunit protein bL36A (37 aa).

It belongs to the bacterial ribosomal protein bL36 family.

The protein is Large ribosomal subunit protein bL36A of Leifsonia xyli subsp. xyli (strain CTCB07).